Reading from the N-terminus, the 1244-residue chain is ATP-dependent helicase/nuclease subunit A (1244 aa).

The UvrD-like helicase ATP-binding domain maps to 4 to 477 (TKWTEEQLSA…IQLYKNFRSR (474 aa)). 25–32 (AAAGSGKT) is an ATP binding site. The UvrD-like helicase C-terminal domain maps to 517–811 (KNVDDIIGGP…RIMSIHKSKG (295 aa)).

The protein belongs to the helicase family. AddA subfamily. Heterodimer of AddA and AddB/RexB. Mg(2+) serves as cofactor.

The enzyme catalyses Couples ATP hydrolysis with the unwinding of duplex DNA by translocating in the 3'-5' direction.. It carries out the reaction ATP + H2O = ADP + phosphate + H(+). Its function is as follows. The heterodimer acts as both an ATP-dependent DNA helicase and an ATP-dependent, dual-direction single-stranded exonuclease. Recognizes the chi site generating a DNA molecule suitable for the initiation of homologous recombination. The AddA nuclease domain is required for chi fragment generation; this subunit has the helicase and 3' -&gt; 5' nuclease activities. The protein is ATP-dependent helicase/nuclease subunit A of Clostridium botulinum (strain Alaska E43 / Type E3).